The primary structure comprises 192 residues: MSLQIGKPAPDFKGTAVVNGAFEEIKLADYKGKWVFLGFYPLDFTFVCPTEIVAFSEAASKFAERNAQVILTSTDSEYSHLAFINTPRKEGGLGGINIPLLADPSHKVSRDYGVLIEDAGVAFRGLFLIDPKGVLRQITINDLPVGRSVDEALRLLDAFQFVEEHGEVCPANWHKGSDTIDTKNPEKYFSKH.

A Thioredoxin domain is found at 3 to 161; the sequence is LQIGKPAPDF…ALRLLDAFQF (159 aa). C48 (cysteine sulfenic acid (-SOH) intermediate) is an active-site residue. 2 positions are modified to phosphoserine: S105 and S148.

Belongs to the peroxiredoxin family. AhpC/Prx1 subfamily. In terms of assembly, homodimer; disulfide-linked, upon oxidation. Interacts with srx1 in response to oxidative stress. Interacts with pap1 via transient disulfide linkages. In terms of processing, the enzyme can be inactivated by further oxidation of the cysteine sulfenic acid (C(P)-SOH) to sulphinic acid (C(P)-SO2H) instead of its condensation to a disulfide bond. It can be reactivated by forming a transient disulfide bond with sulfiredoxin srx1, which reduces the cysteine sulfinic acid in an ATP- and Mg-dependent manner.

It is found in the cytoplasm. Its subcellular location is the nucleus. It catalyses the reaction a hydroperoxide + [thioredoxin]-dithiol = an alcohol + [thioredoxin]-disulfide + H2O. Thiol-specific peroxidase that catalyzes the reduction of hydrogen peroxide and organic hydroperoxides to water and alcohols, respectively. Plays a role in cell protection against oxidative stress by detoxifying peroxides and as sensor of hydrogen peroxide-mediated signaling events. Relays hydrogen peroxide as a signal to the transcription factor pap1 by inducing the formation of intramolecular disulfide bonds in pap1, which causes its nuclear accumulation and activation. Reduced by srx1 and this regulation acts as a molecular switch controlling the transcriptional response to hydrogen peroxide. The chain is Peroxiredoxin tpx1 (tpx1) from Schizosaccharomyces pombe (strain 972 / ATCC 24843) (Fission yeast).